We begin with the raw amino-acid sequence, 283 residues long: MAFTRRLLGHGVGLRAKHFAEHLAVEPPVDWVEAISENFMAPGGRPLAVLEKVRRDVPVVLHGVSLSIGSTDPLSERYLALLTDLTSRIEPAWISDHLCWGSHGGRYAHDLWPLPYTEEALRHVVRRILRVQEVLGRQLLLENVSSYVAFRASEMPEWEFLAEVARRADCGILLDVNNVYVSARNHGFDPYAYLAALPASRIGQIHLAGHSDKGRYLLDTHGEEVPAAVWELYAETVRRFGRISTLIEWDDHVPPLGRLVQESRRAAEVEAAALAALQQGALP.

This sequence belongs to the UPF0276 family.

In Anaeromyxobacter sp. (strain Fw109-5), this protein is UPF0276 protein Anae109_1558.